The primary structure comprises 367 residues: Terpene cyclase verU1 (367 aa).

Residues 8 to 28 (IRCSLLLLGLVGIYTVWISSF) traverse the membrane as a helical segment. A glycan (N-linked (GlcNAc...) asparagine) is linked at Asn50. 8 helical membrane passes run 57–77 (FTGIDTLDKALGIFVVFYWPV), 85–105 (LSLIAFPAAVGVGEMWILFAL), 120–140 (MAMFGMGLMLVGPGIFLPIYC), 169–189 (CLLGGYYILVILLALPSPAVV), 197–217 (IIALLQGWPLLVSAMLWLTHL), 239–259 (ISAMACATISHLVPLLISLLA), 292–312 (FQWDYGLGSLALLLWAVGLHI), and 327–347 (LIPEALFLSVMMSPCGAAALY). Asn352 carries an N-linked (GlcNAc...) asparagine glycan.

Belongs to the membrane-bound ascI terpene cyclase family.

Its subcellular location is the membrane. It functions in the pathway secondary metabolite biosynthesis; terpenoid biosynthesis. Its pathway is mycotoxin biosynthesis. In terms of biological role, terpene cyclase; part of the gene cluster that mediates the biosynthesis of the neurotoxin verrucosidin, a methylated alpha-pyrone polyketide that inhibits oxidative phosphorylation in mitochondria and thereby causes neurological diseases. The carbon backbone of verrucosidin is synthesized by the HR-PKS verA, and further modified by the other verrucodidin cluster enzymes. The sequence is that of Terpene cyclase verU1 from Penicillium polonicum.